The sequence spans 321 residues: Glutaminase (321 aa).

The substrate site is built by serine 69, asparagine 120, glutamate 165, asparagine 172, tyrosine 196, tyrosine 248, and valine 266.

Belongs to the glutaminase family. As to quaternary structure, homotetramer.

The enzyme catalyses L-glutamine + H2O = L-glutamate + NH4(+). The protein is Glutaminase of Bacteroides fragilis (strain ATCC 25285 / DSM 2151 / CCUG 4856 / JCM 11019 / LMG 10263 / NCTC 9343 / Onslow / VPI 2553 / EN-2).